A 446-amino-acid chain; its full sequence is Exodeoxyribonuclease 7 large subunit (446 aa).

This sequence belongs to the XseA family. In terms of assembly, heterooligomer composed of large and small subunits.

The protein localises to the cytoplasm. The enzyme catalyses Exonucleolytic cleavage in either 5'- to 3'- or 3'- to 5'-direction to yield nucleoside 5'-phosphates.. Its function is as follows. Bidirectionally degrades single-stranded DNA into large acid-insoluble oligonucleotides, which are then degraded further into small acid-soluble oligonucleotides. The polypeptide is Exodeoxyribonuclease 7 large subunit (Acholeplasma laidlawii (strain PG-8A)).